The following is a 145-amino-acid chain: D-aminoacyl-tRNA deacylase (145 aa).

The short motif at 137–138 (GP) is the Gly-cisPro motif, important for rejection of L-amino acids element.

It belongs to the DTD family. In terms of assembly, homodimer.

It localises to the cytoplasm. It catalyses the reaction glycyl-tRNA(Ala) + H2O = tRNA(Ala) + glycine + H(+). It carries out the reaction a D-aminoacyl-tRNA + H2O = a tRNA + a D-alpha-amino acid + H(+). Functionally, an aminoacyl-tRNA editing enzyme that deacylates mischarged D-aminoacyl-tRNAs. Also deacylates mischarged glycyl-tRNA(Ala), protecting cells against glycine mischarging by AlaRS. Acts via tRNA-based rather than protein-based catalysis; rejects L-amino acids rather than detecting D-amino acids in the active site. By recycling D-aminoacyl-tRNA to D-amino acids and free tRNA molecules, this enzyme counteracts the toxicity associated with the formation of D-aminoacyl-tRNA entities in vivo and helps enforce protein L-homochirality. The protein is D-aminoacyl-tRNA deacylase of Pseudomonas putida (strain W619).